Here is an 883-residue protein sequence, read N- to C-terminus: HTH-type transcriptional regulator AlkS (883 aa).

Residues 816-881 (ENKAGDFLTL…QAIIEAERQG (66 aa)) form the HTH luxR-type domain. The H-T-H motif DNA-binding region spans 840–859 (NKQIATKMYVTEDAIKWHMR).

The protein operates within hydrocarbon metabolism; alkane degradation. Functionally, may act as a transcriptional regulator of AlkB. This is HTH-type transcriptional regulator AlkS (alkS) from Pseudomonas putida (Arthrobacter siderocapsulatus).